The primary structure comprises 284 residues: MGLAGVKKKQQIGVDPRNSKWAKDTNRLGFKLLSSYGWVNGNGLGEKQHGRIHNIKVSLKDDTLGIGAKATNDLEWSGLGEFNAIFGRLNGDESAYGVYAEKAKVQQLTYERQSANEKGLKSLELSRRFVLGGTFTSEFSEWMQKAEEDEDRVCEDASSSDEAKREKRKKHSSKKKSKKKTSTGSALDPKKLEKITKKKKKEHKKKDKESSSKKRKSGSSDKEEKKKKKIKLKDKPESTSSVEKVKEGNRPASIHFHTRRKFLAQKRAAVSDPVALREILGIKG.

Residues 25 to 71 (TNRLGFKLLSSYGWVNGNGLGEKQHGRIHNIKVSLKDDTLGIGAKAT) enclose the G-patch domain. Residues 149–253 (DEDRVCEDAS…KVKEGNRPAS (105 aa)) form a disordered region. Residues Ser159 and Ser160 each carry the phosphoserine modification. 2 stretches are compositionally biased toward basic residues: residues 166 to 181 (EKRK…KKKT) and 196 to 206 (TKKKKKEHKKK). 2 stretches are compositionally biased toward basic and acidic residues: residues 207–224 (DKES…DKEE) and 233–249 (KDKP…KEGN).

The protein belongs to the PINX1 family.

The protein localises to the nucleus. Its subcellular location is the nucleolus. Functionally, involved in rRNA-processing at A0, A1 and A2 sites and negatively regulates telomerase. In Schizosaccharomyces pombe (strain 972 / ATCC 24843) (Fission yeast), this protein is Protein pxr1 (pxr1).